The chain runs to 261 residues: Hemin import ATP-binding protein HmuV (261 aa).

Residues 3 to 243 enclose the ABC transporter domain; sequence LQAQDLSVDR…ANLRRVYGVE (241 aa). 35 to 42 contacts ATP; it reads GANGAGKS.

Belongs to the ABC transporter superfamily. Heme (hemin) importer (TC 3.A.1.14.5) family. In terms of assembly, the complex is composed of two ATP-binding proteins (HmuV), two transmembrane proteins (HmuU) and a solute-binding protein (HmuT).

The protein resides in the cell inner membrane. Functionally, part of the ABC transporter complex HmuTUV involved in hemin import. Responsible for energy coupling to the transport system. The chain is Hemin import ATP-binding protein HmuV from Bordetella avium (strain 197N).